A 183-amino-acid chain; its full sequence is ESX-1 secretion-associated protein EspH (183 aa).

A compositionally biased stretch (acidic residues) spans 1 to 16 (MVDPPGNDDDHGDLDA). The tract at residues 1–32 (MVDPPGNDDDHGDLDALDFSAAHTNEASPLDA) is disordered.

This chain is ESX-1 secretion-associated protein EspH, found in Mycobacterium tuberculosis (strain ATCC 25618 / H37Rv).